A 463-amino-acid polypeptide reads, in one-letter code: Myocyte-specific enhancer factor 2C (463 aa).

The MADS-box domain maps to 3-57 (RKKIQITRIMDERNRQVTFTKRKFGLMKKAYELSVLCDCEIALIIFNSTNKLFQY). An N6-acetyllysine modification is found at K4. The segment at residues 58–86 (ASTDMDKVLLKYTEYNEPHESRTNSDIVE) is a DNA-binding region (mef2-type). A Phosphoserine; by CK2 modification is found at S59. S98 and S104 each carry phosphoserine. K114 and K117 each carry N6-acetyllysine. Residues 178–223 (NSMSPGVTHRPPSAGNTGGLMGGDLTSGAGTSAGNGYGNPRNSPGL) form a disordered region. S220 and S226 each carry phosphoserine. 2 positions are modified to N6-acetyllysine: K232 and K237. The residue at position 238 (S238) is a Phosphoserine. An N6-acetyllysine mark is found at K250 and K262. T283 and T290 each carry phosphothreonine; by MAPK7 and MAPK14. The transcription repressor stretch occupies residues 358-389 (ACTSTHLSQSSNLSLPSTQSLNIKSEPVSPPR). Positions 365 to 380 (SQSSNLSLPSTQSLNI) are enriched in polar residues. Positions 365–463 (SQSSNLSLPS…RMRLSEGWAT (99 aa)) are disordered. A Glycyl lysine isopeptide (Lys-Gly) (interchain with G-Cter in SUMO) cross-link involves residue K381. S386 bears the Phosphoserine; by CDK5 mark. S409 carries the post-translational modification Phosphoserine; by MAPK7. Positions 409-422 (SPVDSLSSCSSSYD) are enriched in low complexity. A compositionally biased stretch (basic and acidic residues) spans 423–433 (GSDREDHRNEF). S435 is subject to Phosphoserine.

In terms of assembly, forms a complex with class II HDACs in undifferentiating cells. On myogenic differentiation, HDACs are released into the cytoplasm allowing MEF2s to interact with other proteins for activation. Interacts with EP300 in differentiating cells; the interaction acetylates MEF2C leading to increased DNA binding and activation. Interacts with HDAC7 and CARM1. Interacts with HDAC4, HDAC7 and HDAC9; the interaction with HDACs represses transcriptional activity. Interacts with LPIN1. Interacts with MYOCD. Interacts with AKAP13. Interacts with FOXK1; the interaction inhibits MEF2C transactivation activity. Interacts (via N-terminus) with HABP4; this interaction decreases DNA-binding activity of MEF2C in myocardial cells in response to mechanical stress. Interacts with JPH2; interaction specifically takes place with the Junctophilin-2 N-terminal fragment cleavage product of JPH2. Interacts (via MADS box) with SOX18. Interacts with PHF7; the interaction promotes MEF2C binding to its transcription targets. Phosphorylated on Ser-59; which enhances DNA binding activity. Phosphorylated on Ser-386; which is required for Lys-381 sumoylation and inhibits transcriptional activity. Post-translationally, acetylated by p300 on several sites in diffentiating myocytes. Acetylation on Lys-4 increases DNA binding and transactivation. In terms of processing, sumoylated on Lys-381 with SUMO2 but not SUMO1; which represses transcriptional activity. Proteolytically cleaved in cerebellar granule neurons on several sites by caspase 3 and caspase 7 following neurotoxicity. Preferentially cleaves the CDK5-mediated hyperphosphorylated form which leads to neuron apoptosis and transcriptional inactivation.

It is found in the nucleus. The protein localises to the cytoplasm. The protein resides in the sarcoplasm. Its function is as follows. Transcription activator which binds specifically to the MEF2 element present in the regulatory regions of many muscle-specific genes. Controls cardiac morphogenesis and myogenesis, and is also involved in vascular development. Enhances transcriptional activation mediated by SOX18. Plays an essential role in hippocampal-dependent learning and memory by suppressing the number of excitatory synapses and thus regulating basal and evoked synaptic transmission. Crucial for normal neuronal development, distribution, and electrical activity in the neocortex. Necessary for proper development of megakaryocytes and platelets and for bone marrow B-lymphopoiesis. Required for B-cell survival and proliferation in response to BCR stimulation, efficient IgG1 antibody responses to T-cell-dependent antigens and for normal induction of germinal center B-cells. May also be involved in neurogenesis and in the development of cortical architecture. The polypeptide is Myocyte-specific enhancer factor 2C (Sus scrofa (Pig)).